Reading from the N-terminus, the 242-residue chain is MDYQDVEIAYFIERPNRFIAFCLNKKGEVVKTHVKNTGRGKELLLPGAEVALVHIPGTKRKTAYDLIAVKKEQQWFNIDSQLPNRLAIDGILDGTIHLPNLNSDIEFYKREVTFGKSKFDIYLETSCGQKAFVEVKGMTLENKAIGAFPDAPTIRGLKHVNELIGAHQEGYETYILFIAQFEHLHQATIHEQMQPELATAFRFAQQAGVQVIVYNCQVTEKQVVLKQAIPFDLNTVFEDPNL.

The protein belongs to the SfsA family.

The protein is Sugar fermentation stimulation protein homolog of Enterococcus mundtii.